A 294-amino-acid chain; its full sequence is 4-hydroxy-tetrahydrodipicolinate synthase (294 aa).

Thr-47 provides a ligand contact to pyruvate. Tyr-136 (proton donor/acceptor) is an active-site residue. Lys-164 (schiff-base intermediate with substrate) is an active-site residue. A pyruvate-binding site is contributed by Val-206.

This sequence belongs to the DapA family. Homotetramer; dimer of dimers.

The protein localises to the cytoplasm. It carries out the reaction L-aspartate 4-semialdehyde + pyruvate = (2S,4S)-4-hydroxy-2,3,4,5-tetrahydrodipicolinate + H2O + H(+). It participates in amino-acid biosynthesis; L-lysine biosynthesis via DAP pathway; (S)-tetrahydrodipicolinate from L-aspartate: step 3/4. Catalyzes the condensation of (S)-aspartate-beta-semialdehyde [(S)-ASA] and pyruvate to 4-hydroxy-tetrahydrodipicolinate (HTPA). The polypeptide is 4-hydroxy-tetrahydrodipicolinate synthase (Nostoc punctiforme (strain ATCC 29133 / PCC 73102)).